The sequence spans 178 residues: Large ribosomal subunit protein uL5 (178 aa).

It belongs to the universal ribosomal protein uL5 family. Part of the 50S ribosomal subunit; contacts the 5S rRNA and probably tRNA. Forms a bridge to the 30S subunit in the 70S ribosome.

In terms of biological role, this is one of the proteins that bind and probably mediate the attachment of the 5S RNA into the large ribosomal subunit, where it forms part of the central protuberance. In the 70S ribosome it contacts protein S13 of the 30S subunit (bridge B1b), connecting the 2 subunits; this bridge is implicated in subunit movement. May contact the P site tRNA; the 5S rRNA and some of its associated proteins might help stabilize positioning of ribosome-bound tRNAs. The polypeptide is Large ribosomal subunit protein uL5 (Archaeoglobus fulgidus (strain ATCC 49558 / DSM 4304 / JCM 9628 / NBRC 100126 / VC-16)).